A 219-amino-acid chain; its full sequence is MGQKIHPLGFRLGFIQEHYSHWFAKANSYSELLQEDKEIRSCIYNHIRNHVRNSSNYGGIARINIYRRTDLVQLQIHTGFPALLIENRIRGLEHLRRDIQEKIDHKKRKLRMTLVEVLKPYTEPTILAEYIALQLENRVAFRRVMKKAIQLAKISDIKGIKIQIAGRLNGAEIARNEWIQKGRLPLQMLRANIHYCHYPAHTIYGVLGIKVWIFREKII.

Positions 47 to 118 constitute a KH type-2 domain; it reads IRNHVRNSSN…KLRMTLVEVL (72 aa).

Belongs to the universal ribosomal protein uS3 family. In terms of assembly, part of the 30S ribosomal subunit.

The protein localises to the plastid. It is found in the chloroplast. The sequence is that of Small ribosomal subunit protein uS3c (rps3) from Chara vulgaris (Common stonewort).